A 236-amino-acid chain; its full sequence is 2-C-methyl-D-erythritol 4-phosphate cytidylyltransferase (236 aa).

This sequence belongs to the IspD/TarI cytidylyltransferase family. IspD subfamily.

It catalyses the reaction 2-C-methyl-D-erythritol 4-phosphate + CTP + H(+) = 4-CDP-2-C-methyl-D-erythritol + diphosphate. It functions in the pathway isoprenoid biosynthesis; isopentenyl diphosphate biosynthesis via DXP pathway; isopentenyl diphosphate from 1-deoxy-D-xylulose 5-phosphate: step 2/6. Catalyzes the formation of 4-diphosphocytidyl-2-C-methyl-D-erythritol from CTP and 2-C-methyl-D-erythritol 4-phosphate (MEP). The polypeptide is 2-C-methyl-D-erythritol 4-phosphate cytidylyltransferase (Azoarcus sp. (strain BH72)).